The following is a 955-amino-acid chain: Valine--tRNA ligase (955 aa).

A 'HIGH' region motif is present at residues 41–51; that stretch reads PNITGSLHMGH. A 'KMSKS' region motif is present at residues 554-558; sequence KMSKS. ATP is bound at residue Lys557. A coiled-coil region spans residues 926–946; the sequence is QEKNKLLKLNEINLKLSEQIK.

This sequence belongs to the class-I aminoacyl-tRNA synthetase family. ValS type 1 subfamily. In terms of assembly, monomer.

It is found in the cytoplasm. The catalysed reaction is tRNA(Val) + L-valine + ATP = L-valyl-tRNA(Val) + AMP + diphosphate. Functionally, catalyzes the attachment of valine to tRNA(Val). As ValRS can inadvertently accommodate and process structurally similar amino acids such as threonine, to avoid such errors, it has a 'posttransfer' editing activity that hydrolyzes mischarged Thr-tRNA(Val) in a tRNA-dependent manner. The protein is Valine--tRNA ligase of Buchnera aphidicola subsp. Acyrthosiphon pisum (strain APS) (Acyrthosiphon pisum symbiotic bacterium).